Consider the following 1241-residue polypeptide: ATP-dependent helicase/nuclease subunit A (1241 aa).

A UvrD-like helicase ATP-binding domain is found at 12–485 (SQWTDDQWKA…IDLAKNFRSR (474 aa)). An ATP-binding site is contributed by 33 to 40 (AAAGSGKT). The 301-residue stretch at 505 to 805 (GEIDYDADAE…RIMTIHKSKG (301 aa)) folds into the UvrD-like helicase C-terminal domain.

The protein belongs to the helicase family. AddA subfamily. Heterodimer of AddA and AddB/RexB. It depends on Mg(2+) as a cofactor.

It catalyses the reaction Couples ATP hydrolysis with the unwinding of duplex DNA by translocating in the 3'-5' direction.. The enzyme catalyses ATP + H2O = ADP + phosphate + H(+). In terms of biological role, the heterodimer acts as both an ATP-dependent DNA helicase and an ATP-dependent, dual-direction single-stranded exonuclease. Recognizes the chi site generating a DNA molecule suitable for the initiation of homologous recombination. The AddA nuclease domain is required for chi fragment generation; this subunit has the helicase and 3' -&gt; 5' nuclease activities. The sequence is that of ATP-dependent helicase/nuclease subunit A from Bacillus thuringiensis subsp. konkukian (strain 97-27).